The sequence spans 1174 residues: Creatine kinase, flagellar (1174 aa).

Over residues 1 to 14 (MGCAASSQQTTATG) the composition is skewed to polar residues. The interval 1 to 62 (MGCAASSQQT…PFVEPDPNYP (62 aa)) is disordered. Positions 18–39 (AAGEKANPAPANNNPNAANKAE) are enriched in low complexity. One can recognise a Phosphagen kinase N-terminal 1 domain in the interval 53-139 (PFVEPDPNYP…FDPTIDKRHN (87 aa)). Residues 61–414 (YPDLSKHNNY…EKALEKGSDI (354 aa)) form a 1; approximate repeat. The Phosphagen kinase C-terminal 1 domain maps to 166–408 (YVLSCRVRTG…KKLIELEKAL (243 aa)). Residues 169-173 (SCRVR), histidine 232, arginine 277, and 333-337 (RAGVH) each bind ATP. The 87-residue stretch at 426–512 (RAEQVKEGYP…FDPVIDARHG (87 aa)) folds into the Phosphagen kinase N-terminal 2 domain. The 2; approximate repeat unit spans residues 434 to 787 (YPDLSKHNNH…EKKLEKGEDI (354 aa)). The region spanning 539 to 781 (YVLSCRVRTG…ELLVQMEKKL (243 aa)) is the Phosphagen kinase C-terminal 2 domain. Residues 542–546 (SCRVR), histidine 605, arginine 706, 734–739 (RGTGGV), and aspartate 749 each bind ATP. The Phosphagen kinase N-terminal 3 domain occupies 800-886 (PIKPFSYDYP…FDPVISARHG (87 aa)). One copy of the 3; approximate repeat lies at 808-1161 (YPDFSLHNNW…EKALMKGEDI (354 aa)). The Phosphagen kinase C-terminal 3 domain maps to 913-1155 (FVLSCRVRTG…KLLVNLEKAL (243 aa)).

The protein belongs to the ATP:guanido phosphotransferase family. Monomer.

The protein resides in the cytoplasm. Its subcellular location is the cytoskeleton. The protein localises to the flagellum axoneme. The catalysed reaction is creatine + ATP = N-phosphocreatine + ADP + H(+). Its function is as follows. This axonemal protein participates in an energy shuttle that utilizes phosphocreatine to transfer the energy from ATP generated by the mitochondrion in the sperm head to dynein in the distal portions of the flagellum. This Strongylocentrotus purpuratus (Purple sea urchin) protein is Creatine kinase, flagellar.